The chain runs to 244 residues: Transcriptional activator protein anr (244 aa).

21–149 (APLCLPLSLT…RLMSREIRDD (129 aa)) is a binding site for a nucleoside 3',5'-cyclic phosphate. Residues 159-232 (KTADERIATF…GKEVHILDSI (74 aa)) enclose the HTH crp-type domain. The H-T-H motif DNA-binding region spans 192-211 (RNEIGNYLGLAVETVSRVFT).

Its function is as follows. Transcriptional activator of anaerobic gene expression. The protein is Transcriptional activator protein anr (anr) of Pseudomonas aeruginosa (strain ATCC 15692 / DSM 22644 / CIP 104116 / JCM 14847 / LMG 12228 / 1C / PRS 101 / PAO1).